Here is a 1737-residue protein sequence, read N- to C-terminus: Intraflagellar transport protein osm-1 (1737 aa).

7 WD repeats span residues 14 to 53, 63 to 103, 110 to 150, 151 to 189, 191 to 229, 233 to 273, and 511 to 553; these read DGEA…KDRF, GKKS…NEKK, VQPS…SLYK, TDET…QSKI, TLQV…QQFD, QSEK…WDEG, and DQRS…EQVT. TPR repeat units follow at residues 700 to 737, 803 to 836, 848 to 881, 907 to 940, 979 to 1012, 1037 to 1070, and 1137 to 1170; these read NDTE…KTSY, SQLY…GKAI, VTLE…KKAV, TGYY…NDAI, HGRF…DDVL, RGDL…SDAY, and GTVH…ELAV.

This sequence belongs to the IFT172 family. As to quaternary structure, component of the IFT complex B composed of at least che-2, che-13, dyf-1, dyf-3, dyf-6, dyf-11, dyf-13, ift-20, ift-74, ift-81, ifta-2, osm-1, osm-5 and osm-6. As to expression, expressed in amphid and phasmid chemosensory neurons, where it appears to concentrate at the base of the transition zones, which correspond to the basal bodies of motile and sensory cilia. Moves in the retrograde direction along cilia and dendrites, suggesting that it is retrieved from the distal endings of the cilia by a retrograde transport pathway that moves it along cilia and then dendrites, back to the neuronal cell body.

It localises to the cell projection. The protein localises to the cilium. In terms of biological role, component of the intraflagellar transport (IFT) complex B required for transport of proteins in the motile cilium. May be required for ciliary entrance and transport of specific ciliary cargo proteins such as che-3 which are related to motility. Required for the maintenance and formation of chemosensory cilia that detect chemosensory cues. The polypeptide is Intraflagellar transport protein osm-1 (Caenorhabditis elegans).